Here is a 307-residue protein sequence, read N- to C-terminus: Ribonuclease Z (307 aa).

H63, H65, D67, H68, H143, D213, and H271 together coordinate Zn(2+). D67 acts as the Proton acceptor in catalysis.

This sequence belongs to the RNase Z family. Homodimer. Zn(2+) is required as a cofactor.

It catalyses the reaction Endonucleolytic cleavage of RNA, removing extra 3' nucleotides from tRNA precursor, generating 3' termini of tRNAs. A 3'-hydroxy group is left at the tRNA terminus and a 5'-phosphoryl group is left at the trailer molecule.. Functionally, zinc phosphodiesterase, which displays some tRNA 3'-processing endonuclease activity. Probably involved in tRNA maturation, by removing a 3'-trailer from precursor tRNA. In Lactococcus lactis subsp. lactis (strain IL1403) (Streptococcus lactis), this protein is Ribonuclease Z.